We begin with the raw amino-acid sequence, 133 residues long: NADPH-dependent 7-cyano-7-deazaguanine reductase (133 aa).

Residue cysteine 48 is the Thioimide intermediate of the active site. The active-site Proton donor is aspartate 55. Residues 70–72 (VEL) and 89–90 (QE) contribute to the substrate site.

This sequence belongs to the GTP cyclohydrolase I family. QueF type 1 subfamily.

It localises to the cytoplasm. It catalyses the reaction 7-aminomethyl-7-carbaguanine + 2 NADP(+) = 7-cyano-7-deazaguanine + 2 NADPH + 3 H(+). It participates in tRNA modification; tRNA-queuosine biosynthesis. Its function is as follows. Catalyzes the NADPH-dependent reduction of 7-cyano-7-deazaguanine (preQ0) to 7-aminomethyl-7-deazaguanine (preQ1). The chain is NADPH-dependent 7-cyano-7-deazaguanine reductase from Thermoanaerobacter pseudethanolicus (strain ATCC 33223 / 39E) (Clostridium thermohydrosulfuricum).